The following is a 181-amino-acid chain: MQRLEESLHEAPIIDKDGYSYLVHPISNGVPMLDPQLLREVVVGITRAADLDVDKIVAPEAMGIHIATALSLQTDVPLVVIRKREYGLDGEVALHQTTGYSESEMFINDIEDGDRVLVVDDLLSTGGTLAAICGALDDIGAEVSDIVVAIRKVGETALDDTDYEATSLVDISVDEDGVEIH.

The protein belongs to the purine/pyrimidine phosphoribosyltransferase family. Archaeal HPRT subfamily.

In terms of biological role, may catalyze a purine salvage reaction, the substrate is unknown. This Haloferax volcanii (strain ATCC 29605 / DSM 3757 / JCM 8879 / NBRC 14742 / NCIMB 2012 / VKM B-1768 / DS2) (Halobacterium volcanii) protein is HGPRTase-like protein 2.